Reading from the N-terminus, the 509-residue chain is CDK5RAP3 protein homolog (509 aa).

The protein belongs to the CDK5RAP3 family.

The protein localises to the nucleus. It localises to the cytoplasm. In terms of biological role, substrate adapter of E3 ligase complexes mediating ufmylation, the covalent attachment of the ubiquitin-like modifier UFM1 to substrate proteins, and which is involved in various processes, such as ribosome recycling and reticulophagy (also called ER-phagy). This Drosophila melanogaster (Fruit fly) protein is CDK5RAP3 protein homolog.